A 154-amino-acid chain; its full sequence is Transcriptional repressor NrdR (154 aa).

A zinc finger lies at 3 to 34 (CPFCGANDTKVIDSRLVAEGEQVRRRRECLAC). Residues 49-139 (PRLIKQDGSR…VYRRFQDLNE (91 aa)) enclose the ATP-cone domain.

This sequence belongs to the NrdR family. Zn(2+) is required as a cofactor.

Its function is as follows. Negatively regulates transcription of bacterial ribonucleotide reductase nrd genes and operons by binding to NrdR-boxes. In Pseudomonas savastanoi pv. phaseolicola (strain 1448A / Race 6) (Pseudomonas syringae pv. phaseolicola (strain 1448A / Race 6)), this protein is Transcriptional repressor NrdR.